We begin with the raw amino-acid sequence, 231 residues long: Octanoyltransferase (231 aa).

Positions 49–227 constitute a BPL/LPL catalytic domain; sequence PHLPEAVWLL…ALAARFHLAW (179 aa). Substrate is bound by residues 91-98, 158-160, and 171-173; these read RGGEVTHH, AIG, and GLA. The active-site Acyl-thioester intermediate is Cys189.

It belongs to the LipB family.

It is found in the cytoplasm. The catalysed reaction is octanoyl-[ACP] + L-lysyl-[protein] = N(6)-octanoyl-L-lysyl-[protein] + holo-[ACP] + H(+). It participates in protein modification; protein lipoylation via endogenous pathway; protein N(6)-(lipoyl)lysine from octanoyl-[acyl-carrier-protein]: step 1/2. In terms of biological role, catalyzes the transfer of endogenously produced octanoic acid from octanoyl-acyl-carrier-protein onto the lipoyl domains of lipoate-dependent enzymes. Lipoyl-ACP can also act as a substrate although octanoyl-ACP is likely to be the physiological substrate. This chain is Octanoyltransferase, found in Parasynechococcus marenigrum (strain WH8102).